A 266-amino-acid polypeptide reads, in one-letter code: Pre-mRNA-splicing factor CWC26 (266 aa).

Disordered regions lie at residues 1 to 37 (MALHQYLSETYGPTKPKNKTKKKKKESKSDANSDKTS) and 118 to 149 (TRKTIYRDAQGHKIQEDSKIDDSSFSRSKYED). Basic residues predominate over residues 16–26 (PKNKTKKKKKE). A compositionally biased stretch (basic and acidic residues) spans 122 to 149 (IYRDAQGHKIQEDSKIDDSSFSRSKYED).

Belongs to the CWC26 family. Belongs to the pre-mRNA retention and splicing (RES) complex composed of at least BUD13, IST3 and PML1. May also belong to the CWC complex (or CEF1-associated complex) composed of the U2, U5 and U6 snRNAs and at least BUD13, BUD31, BRR2, CDC40, CEF1, CLF1, CUS1, CWC2, CWC15, CWC21, CWC22, CWC23, CWC24, CWC25, CWC27, ECM2, HSH155, IST3, ISY1, LEA1, MSL1, NTC20, PRP8, PRP9, PRP11, PRP19, PRP21, PRP22, PRP45, PRP46, SLU7, SMB1, SMD1, SMD2, SMD3, SMX2, SMX3, SNT309, SNU114, SPP2, SYF1, SYF2, RSE1 and YJU2. Interacts with IST3 and PML1.

Its subcellular location is the cytoplasm. It is found in the nucleus. Required for efficient splicing and pre-mRNA nuclear retention. May also be involved in positioning the proximal bud pole signal. This chain is Pre-mRNA-splicing factor CWC26 (BUD13), found in Saccharomyces cerevisiae (strain ATCC 204508 / S288c) (Baker's yeast).